Here is a 73-residue protein sequence, read N- to C-terminus: Conotoxin CnIIIF (73 aa).

The first 19 residues, 1–19 (MSKLGVLLTICLLLFPLTA), serve as a signal peptide directing secretion. A propeptide spanning residues 20 to 51 (LPMDGDQSVDRPAERMQDDISSGQHPLFNQKR) is cleaved from the precursor. 3 cysteine pairs are disulfide-bonded: C53-C72, C54-C70, and C60-C73.

Belongs to the conotoxin M superfamily. As to expression, expressed by the venom duct.

It localises to the secreted. In terms of biological role, shows a paralytic effect in fish. The chain is Conotoxin CnIIIF from Conus consors (Singed cone).